Reading from the N-terminus, the 77-residue chain is Large ribosomal subunit protein uL24 (77 aa).

The protein belongs to the universal ribosomal protein uL24 family. Part of the 50S ribosomal subunit.

In terms of biological role, one of two assembly initiator proteins, it binds directly to the 5'-end of the 23S rRNA, where it nucleates assembly of the 50S subunit. Functionally, one of the proteins that surrounds the polypeptide exit tunnel on the outside of the subunit. This is Large ribosomal subunit protein uL24 from Campylobacter jejuni subsp. jejuni serotype O:6 (strain 81116 / NCTC 11828).